Consider the following 806-residue polypeptide: Leucine--tRNA ligase (806 aa).

The 'HIGH' region motif lies at serine 54–histidine 64. The short motif at lysine 571–serine 575 is the 'KMSKS' region element. Lysine 574 lines the ATP pocket.

This sequence belongs to the class-I aminoacyl-tRNA synthetase family.

The protein localises to the cytoplasm. It catalyses the reaction tRNA(Leu) + L-leucine + ATP = L-leucyl-tRNA(Leu) + AMP + diphosphate. The sequence is that of Leucine--tRNA ligase from Tropheryma whipplei (strain Twist) (Whipple's bacillus).